The chain runs to 776 residues: MVKQAVKVFVRTRPTATSGSGLKLGPDGQSVSVNVPKDLSAGPVNNQQEQFSFKFDGVLENVSQEAAYTTLAHEVVDSLMAGYHGTIFAYGQTGAGKTFTMSGGGTAYAHRGLIPRAIHHVFREVDMRADKMYRVHVSYLEIYNEQLYDLLGDTPGTSDALAVLEDSNSNTYVRGLTLVPVRSEEEALAQFFLGEQGRTTAGHVLNAESSRSHTVFTIHVEMRTSDAASERAVLSKLNLVDLAGSERTKKTGVTGQTLKEAQFINRSLSFLEQTVNALSRKDTYVPFRQTKLTAVLRDALGGNCKTVMVANIWAEPSHNEETLSTLRFASRVRTLTTDLALNESNDPALLLRRYERQIKELKAELAMRDTLSGKGRVSYDDLTDDELRELHATCRRFLHGEAEPEDLPADSMKRVRETFKALRAVHVAIKADMATQMATLRRATEEGSGAAARGGDSAGPSGVGDVDLRATGGFTVGHAPLDARPPVRSELGSPGAGASGAEALGEPRSPGGGLHAQASSHTDAGSNWGDAGPLSSPGGTRLAGIFGVSGDRNAVFRRYKVDVGEGRELAASLKAASIALADTKASIRSLGASVNDAKQRIDELSSALALRRGATPAGGDGEVLDSEAYALMQELKSAKSRYRTDFDSLKSAREELEPQIQAVAVARAGLLEAFDRWAAAQSDTTLKRMATAGRAMSGIAPGEEDEMDAGEQFERMQIARISERDPDSLAFHTALKRTGAAVSRPATVATGGNAKAAAMATRKMEHTQAVNRGLAR.

The region spanning 5–335 (AVKVFVRTRP…LRFASRVRTL (331 aa)) is the Kinesin motor domain. 91–98 (GQTGAGKT) is a binding site for ATP. A coiled-coil region spans residues 348–371 (ALLLRRYERQIKELKAELAMRDTL). The segment at 441–535 (RRATEEGSGA…SNWGDAGPLS (95 aa)) is disordered. Residues 447–460 (GSGAAARGGDSAGP) are compositionally biased toward low complexity. Positions 579-657 (ALADTKASIR…SLKSAREELE (79 aa)) form a coiled coil. The interval 658–776 (PQIQAVAVAR…TQAVNRGLAR (119 aa)) is globular.

Belongs to the TRAFAC class myosin-kinesin ATPase superfamily. Kinesin family.

Its subcellular location is the cytoplasm. The protein resides in the cytoskeleton. It is found in the flagellum axoneme. Its function is as follows. May play a role in rotation or twisting of the central pair microtubules of the flagella axoneme. The sequence is that of Kinesin-like protein KLP1 (KLP1) from Chlamydomonas reinhardtii (Chlamydomonas smithii).